The following is a 666-amino-acid chain: MSQQKKYIFQVEEGKEGSDGRPSVGPVYRSIFAKDGFPDPIEGMDSCWDVFRMSVEKYPNNPMLGRREIVDGKPGKYVWQTYQEVYDIVMKLGNSLRSVGVKDEAKCGIYGANSPEWIISMEACNAHGLYCVPLYDTLGADAVEFIISHSEVSIVFVEEKKISELFKTCPNSTEYMKTVVSFGGVSREQKEEAETFGLVIYAWDEFLKLGEGKQYDLPIKKKSDICTIMYTSGTTGDPKGVMISNESIVTLIAGVIRLLKSANEALTVKDVYLSYLPLAHIFDRVIEECFIQHGAAIGFWRGDVKLLIEDLAELKPTIFCAVPRVLDRVYSGLQKKLSDGGFLKKFIFDSAFSYKFGYMKKGQSHVEASPLFDKLVFSKVKQGLGGNVRIILSGAAPLASHVESFLRVVACCHVLQGYGLTESCAGTFVSLPDELGMLGTVGPPVPNVDIRLESVPEMEYDALASTARGEICIRGKTLFSGYYKREDLTKEVLIDGWLHTGDVGEWQPDGSMKIIDRKKNIFKLSQGEYVAVENIENIYGEVQAVDSVWVYGNSFESFLIAIANPNQHILERWAAENGVSGDYDALCQNEKAKEFILGELVKMAKEKKMKGFEIIKAIHLDPVPFDMERDLLTPTFKKKRPQLLKYYQSVIDEMYKTINAKFASRG.

Residue 228–239 (IMYTSGTTGDPK) coordinates ATP. The segment at 495–519 (DGWLHTGDVGEWQPDGSMKIIDRKK) is fatty acid-binding.

Belongs to the ATP-dependent AMP-binding enzyme family. It depends on Mg(2+) as a cofactor.

The catalysed reaction is a long-chain fatty acid + ATP + CoA = a long-chain fatty acyl-CoA + AMP + diphosphate. It functions in the pathway lipid metabolism; fatty acid metabolism. Functionally, activation of long-chain fatty acids for both synthesis of cellular lipids, and degradation via beta-oxidation. Preferentially uses palmitate, palmitoleate, oleate and linoleate. This chain is Long chain acyl-CoA synthetase 4 (LACS4), found in Arabidopsis thaliana (Mouse-ear cress).